The primary structure comprises 397 residues: Chorismate synthase (397 aa).

NADP(+)-binding residues include Arg-40 and Arg-46. FMN-binding positions include 129 to 131, 257 to 258, Gly-302, 317 to 321, and Arg-343; these read RSS, QA, and KPISS.

The protein belongs to the chorismate synthase family. As to quaternary structure, homotetramer. It depends on FMNH2 as a cofactor.

It carries out the reaction 5-O-(1-carboxyvinyl)-3-phosphoshikimate = chorismate + phosphate. It functions in the pathway metabolic intermediate biosynthesis; chorismate biosynthesis; chorismate from D-erythrose 4-phosphate and phosphoenolpyruvate: step 7/7. Catalyzes the anti-1,4-elimination of the C-3 phosphate and the C-6 proR hydrogen from 5-enolpyruvylshikimate-3-phosphate (EPSP) to yield chorismate, which is the branch point compound that serves as the starting substrate for the three terminal pathways of aromatic amino acid biosynthesis. This reaction introduces a second double bond into the aromatic ring system. This Chlorobium phaeovibrioides (strain DSM 265 / 1930) (Prosthecochloris vibrioformis (strain DSM 265)) protein is Chorismate synthase.